Reading from the N-terminus, the 670-residue chain is uncharacterized protein (670 aa).

The next 10 helical transmembrane spans lie at 23 to 42 (YALR…YYLN), 47 to 69 (YWAM…SKSL), 76 to 98 (LLGA…FFLL), 118 to 140 (VAYA…VNIT), 153 to 170 (VCEV…MMIL), 381 to 403 (QWDA…SAVA), 410 to 432 (SLLM…GLMV), 437 to 454 (LWQF…MQLL), 461 to 483 (FAAL…NPPV), and 493 to 510 (NLAK…FAIL).

The protein belongs to the aromatic acid exporter ArAE (TC 2.A.85) family.

The protein resides in the cell membrane. This is an uncharacterized protein from Escherichia coli (strain K12).